A 292-amino-acid polypeptide reads, in one-letter code: Acetyl-coenzyme A carboxylase carboxyl transferase subunit beta (292 aa).

Residues 29–292 (LWSKCPECGQ…HGCLQGSAAV (264 aa)) enclose the CoA carboxyltransferase N-terminal domain. Zn(2+)-binding residues include C33, C36, C52, and C55. The segment at 33–55 (CPECGQVVYRKDLLANASVCSNC) adopts a C4-type zinc-finger fold.

It belongs to the AccD/PCCB family. As to quaternary structure, acetyl-CoA carboxylase is a heterohexamer composed of biotin carboxyl carrier protein (AccB), biotin carboxylase (AccC) and two subunits each of ACCase subunit alpha (AccA) and ACCase subunit beta (AccD). Requires Zn(2+) as cofactor.

It is found in the cytoplasm. It carries out the reaction N(6)-carboxybiotinyl-L-lysyl-[protein] + acetyl-CoA = N(6)-biotinyl-L-lysyl-[protein] + malonyl-CoA. It participates in lipid metabolism; malonyl-CoA biosynthesis; malonyl-CoA from acetyl-CoA: step 1/1. Its function is as follows. Component of the acetyl coenzyme A carboxylase (ACC) complex. Biotin carboxylase (BC) catalyzes the carboxylation of biotin on its carrier protein (BCCP) and then the CO(2) group is transferred by the transcarboxylase to acetyl-CoA to form malonyl-CoA. In Synechococcus sp. (strain WH7803), this protein is Acetyl-coenzyme A carboxylase carboxyl transferase subunit beta.